A 418-amino-acid polypeptide reads, in one-letter code: Tyrosine--tRNA ligase (418 aa).

The 'HIGH' region signature appears at 42-51 (PTSPDLHLGH). The 'KMSKS' region signature appears at 226–230 (KMSKS). Lysine 229 contacts ATP. The S4 RNA-binding domain occupies 339–400 (VRLVALLTKS…GKRNFIKVRL (62 aa)).

This sequence belongs to the class-I aminoacyl-tRNA synthetase family. TyrS type 2 subfamily. Homodimer.

The protein localises to the cytoplasm. The catalysed reaction is tRNA(Tyr) + L-tyrosine + ATP = L-tyrosyl-tRNA(Tyr) + AMP + diphosphate + H(+). Its function is as follows. Catalyzes the attachment of tyrosine to tRNA(Tyr) in a two-step reaction: tyrosine is first activated by ATP to form Tyr-AMP and then transferred to the acceptor end of tRNA(Tyr). The polypeptide is Tyrosine--tRNA ligase (Xylella fastidiosa (strain Temecula1 / ATCC 700964)).